Here is a 269-residue protein sequence, read N- to C-terminus: Formamidopyrimidine-DNA glycosylase (269 aa).

Pro2 functions as the Schiff-base intermediate with DNA in the catalytic mechanism. Catalysis depends on Glu3, which acts as the Proton donor. Lys57 acts as the Proton donor; for beta-elimination activity in catalysis. DNA is bound by residues His90, Arg109, and Lys150. An FPG-type zinc finger spans residues 235–269; it reads QVYGRKGEPCRVCGTPIAATKHAQRATFYCRHCQK. Arg259 serves as the catalytic Proton donor; for delta-elimination activity.

Belongs to the FPG family. As to quaternary structure, monomer. Zn(2+) is required as a cofactor.

It catalyses the reaction Hydrolysis of DNA containing ring-opened 7-methylguanine residues, releasing 2,6-diamino-4-hydroxy-5-(N-methyl)formamidopyrimidine.. It carries out the reaction 2'-deoxyribonucleotide-(2'-deoxyribose 5'-phosphate)-2'-deoxyribonucleotide-DNA = a 3'-end 2'-deoxyribonucleotide-(2,3-dehydro-2,3-deoxyribose 5'-phosphate)-DNA + a 5'-end 5'-phospho-2'-deoxyribonucleoside-DNA + H(+). Its function is as follows. Involved in base excision repair of DNA damaged by oxidation or by mutagenic agents. Acts as a DNA glycosylase that recognizes and removes damaged bases. Has a preference for oxidized purines, such as 7,8-dihydro-8-oxoguanine (8-oxoG). Has AP (apurinic/apyrimidinic) lyase activity and introduces nicks in the DNA strand. Cleaves the DNA backbone by beta-delta elimination to generate a single-strand break at the site of the removed base with both 3'- and 5'-phosphates. The sequence is that of Formamidopyrimidine-DNA glycosylase from Salmonella paratyphi B (strain ATCC BAA-1250 / SPB7).